We begin with the raw amino-acid sequence, 208 residues long: Small ribosomal subunit protein uS4A (208 aa).

Residues 98–159 enclose the S4 RNA-binding domain; that stretch reads SRLDNVAYNM…HAKSYLRIKA (62 aa).

The protein belongs to the universal ribosomal protein uS4 family. In terms of assembly, part of the 30S ribosomal subunit. Contacts protein S5. The interaction surface between S4 and S5 is involved in control of translational fidelity.

One of the primary rRNA binding proteins, it binds directly to 16S rRNA where it nucleates assembly of the body of the 30S subunit. Functionally, with S5 and S12 plays an important role in translational accuracy. The protein is Small ribosomal subunit protein uS4A (rpsD1) of Nitrosomonas europaea (strain ATCC 19718 / CIP 103999 / KCTC 2705 / NBRC 14298).